Here is a 299-residue protein sequence, read N- to C-terminus: Tetrahydromethanopterin S-methyltransferase subunit E (299 aa).

Transmembrane regions (helical) follow at residues 57–77 (AISGEPVSYGLYVAVAGTIAW), 80–100 (INAGLNAVLAIIVGSGVAAIV), 133–153 (IGPIVGHGFIAVFTMTLAAYL), 158–178 (LGNPFPLPLVALIFGITVGAI), 226–246 (YFCSRFGGPLTGLCFGLIIFL), and 262–282 (VTKTSIALLVGLLVVAVAAVI).

This sequence belongs to the MtrE family. The complex is composed of 8 subunits; MtrA, MtrB, MtrC, MtrD, MtrE, MtrF, MtrG and MtrH.

The protein localises to the cell membrane. The catalysed reaction is 5-methyl-5,6,7,8-tetrahydromethanopterin + coenzyme M + 2 Na(+)(in) = 5,6,7,8-tetrahydromethanopterin + methyl-coenzyme M + 2 Na(+)(out). The protein operates within one-carbon metabolism; methanogenesis from CO(2); methyl-coenzyme M from 5,10-methylene-5,6,7,8-tetrahydromethanopterin: step 2/2. Functionally, part of a complex that catalyzes the formation of methyl-coenzyme M and tetrahydromethanopterin from coenzyme M and methyl-tetrahydromethanopterin. This is an energy-conserving, sodium-ion translocating step. This is Tetrahydromethanopterin S-methyltransferase subunit E from Methanococcus maripaludis (strain C7 / ATCC BAA-1331).